The primary structure comprises 130 residues: Methylglyoxal synthase (130 aa).

The 130-residue stretch at 1–130 (MSKPRIALIA…DLARNMQDVC (130 aa)) folds into the MGS-like domain. Residues H11, K15, 37–40 (TGTT), and 57–58 (SG) each bind substrate. Residue D63 is the Proton donor/acceptor of the active site. Residue H90 participates in substrate binding.

The protein belongs to the methylglyoxal synthase family.

It carries out the reaction dihydroxyacetone phosphate = methylglyoxal + phosphate. Functionally, catalyzes the formation of methylglyoxal from dihydroxyacetone phosphate. This Burkholderia cenocepacia (strain HI2424) protein is Methylglyoxal synthase.